Reading from the N-terminus, the 20-residue chain is Pregnancy-associated glycoprotein 57 (20 aa).

This sequence belongs to the peptidase A1 family. In terms of processing, glycosylated.

The protein localises to the secreted. The sequence is that of Pregnancy-associated glycoprotein 57 from Ovis aries (Sheep).